The sequence spans 185 residues: Anaphase-promoting complex subunit 10 (185 aa).

An N-acetylthreonine modification is found at Thr2. In terms of domain architecture, DOC spans 2-185; that stretch reads TTPNKTPPGA…IDFMMYRSIR (184 aa). Lys169 carries the post-translational modification N6-acetyllysine.

It belongs to the APC10 family. The mammalian APC/C is composed at least of 14 distinct subunits ANAPC1, ANAPC2, CDC27/APC3, ANAPC4, ANAPC5, CDC16/APC6, ANAPC7, CDC23/APC8, ANAPC10, ANAPC11, CDC26/APC12, ANAPC13, ANAPC15 and ANAPC16 that assemble into a complex of at least 19 chains with a combined molecular mass of around 1.2 MDa; APC/C interacts with FZR1 and FBXO5. The C-terminus of APC10 binds to CDC27/APC3. Interacts with PIWIL1; interaction only takes place when PIWIL1 binds piRNA. Interacts with FBXO43; the interaction is direct.

The protein operates within protein modification; protein ubiquitination. Functionally, component of the anaphase promoting complex/cyclosome (APC/C), a cell cycle-regulated E3 ubiquitin ligase that controls progression through mitosis and the G1 phase of the cell cycle. The APC/C complex acts by mediating ubiquitination and subsequent degradation of target proteins: it mainly mediates the formation of 'Lys-11'-linked polyubiquitin chains and, to a lower extent, the formation of 'Lys-48'- and 'Lys-63'-linked polyubiquitin chains. The APC/C complex catalyzes assembly of branched 'Lys-11'-/'Lys-48'-linked branched ubiquitin chains on target proteins. The polypeptide is Anaphase-promoting complex subunit 10 (ANAPC10) (Homo sapiens (Human)).